A 102-amino-acid polypeptide reads, in one-letter code: MKKVLALVVAAAMGLSSAAFAAETATTPAPTATTTKAAPAKTTHHKKQHKAAPAQKAQAAKKHHKNAKAEQKAPEQKAQAAKKHARKHSHQQPAKPAAQPAA.

A signal peptide spans 1–21; it reads MKKVLALVVAAAMGLSSAAFA. A compositionally biased stretch (low complexity) spans 22–41; that stretch reads AETATTPAPTATTTKAAPAK. The propeptide occupies 22–58; it reads AETATTPAPTATTTKAAPAKTTHHKKQHKAAPAQKAQ. The disordered stretch occupies residues 22-102; sequence AETATTPAPT…PAKPAAQPAA (81 aa). Residues 80–90 are compositionally biased toward basic residues; that stretch reads AAKKHARKHSH. Residues 91-102 are compositionally biased toward low complexity; it reads QQPAKPAAQPAA.

This sequence belongs to the Asr family. Proteolytic processing gives rise to the active protein.

It is found in the periplasm. Functionally, required for growth and/or survival at acidic conditions. This is Acid shock protein from Escherichia coli O127:H6 (strain E2348/69 / EPEC).